Reading from the N-terminus, the 181-residue chain is 3-hexulose-6-phosphate isomerase (181 aa).

An SIS domain is found at 27 to 168; it reads ILSLVDAAGR…IAKLVDQKGL (142 aa). Residues serine 45 and 84–89 contribute to the substrate site; that span reads SGSGST. Glutamate 148 serves as the catalytic Proton acceptor.

This sequence belongs to the SIS family. PHI subfamily. Homodimer.

The catalysed reaction is D-arabino-hex-3-ulose 6-phosphate = beta-D-fructose 6-phosphate. The protein operates within one-carbon metabolism; formaldehyde assimilation via RuMP pathway; D-fructose 6-phosphate from D-ribulose 5-phosphate and formaldehyde: step 2/2. Catalyzes the isomerization between 3-hexulose 6-phosphate and fructose 6-phosphate. This is 3-hexulose-6-phosphate isomerase (rmpB) from Methylomonas aminofaciens.